The following is a 457-amino-acid chain: Transmembrane protease serine 5 (457 aa).

A disordered region spans residues 1–21 (MSLMLDDQPPMEAQYAEEGPG). Topologically, residues 1–49 (MSLMLDDQPPMEAQYAEEGPGPGIFRAEPGDQQHPISQAVCWRSMRRGC) are cytoplasmic. Residues 50–70 (AVLGALGLLAGAGVGSWLLVL) form a helical; Signal-anchor for type II membrane protein membrane-spanning segment. Residues 71 to 457 (YLCPAASQPI…IHDTAQDSLL (387 aa)) are Extracellular-facing. The region spanning 112 to 207 (FRINSEDFLL…SGQVVSLRCS (96 aa)) is the SRCR domain. Cystine bridges form between Cys-135–Cys-196, Cys-148–Cys-206, Cys-209–Cys-328, Cys-243–Cys-259, Cys-342–Cys-411, Cys-374–Cys-390, and Cys-401–Cys-429. N-linked (GlcNAc...) asparagine glycans are attached at residues Asn-163, Asn-170, and Asn-195. Residues 218 to 453 (IVGGQSVAPG…FLDWIHDTAQ (236 aa)) enclose the Peptidase S1 domain. Active-site charge relay system residues include His-258 and Asp-308. Asn-319 and Asn-375 each carry an N-linked (GlcNAc...) asparagine glycan. Ser-405 functions as the Charge relay system in the catalytic mechanism.

Belongs to the peptidase S1 family. Brain-specific. Predominantly expressed in neurons, in their axons, and at the synapses of motoneurons in the spinal cord.

It localises to the cell membrane. Its function is as follows. May play a role in hearing. In Homo sapiens (Human), this protein is Transmembrane protease serine 5 (TMPRSS5).